The following is a 177-amino-acid chain: CASP-like protein 5A2 (177 aa).

Residues 1 to 36 are Cytoplasmic-facing; that stretch reads MNASHPAVHPVGVPPAVAGQLPPRMRMKEIQGMPGT. A helical transmembrane segment spans residues 37–57; that stretch reads IGGLLLRLGQFCFALVAFSIM. Over 58-68 the chain is Extracellular; the sequence is VSIENFSTVTA. Residue Asn62 is glycosylated (N-linked (GlcNAc...) asparagine). A helical membrane pass occupies residues 69 to 89; that stretch reads FCYLVAATVLQCLWSLALAII. The Cytoplasmic segment spans residues 90-103; it reads DGYALLVKRSLRNS. The chain crosses the membrane as a helical span at residues 104-124; the sequence is LLVSLLVVGDGVTATLTFAAA. At 125 to 153 the chain is on the extracellular side; that stretch reads CASAGITVLIGNDLRQCKENHCARYETAT. A helical transmembrane segment spans residues 154-174; it reads ALAFLSWFMVSLSFILTFWLL. The Cytoplasmic segment spans residues 175 to 177; that stretch reads ATR.

This sequence belongs to the Casparian strip membrane proteins (CASP) family. In terms of assembly, homodimer and heterodimers.

It localises to the cell membrane. This Ginkgo biloba (Ginkgo) protein is CASP-like protein 5A2.